The chain runs to 369 residues: Deoxyhypusine synthase (369 aa).

NAD(+) is bound by residues 105 to 109, 131 to 133, E137, and D238; these read SNLIS and TAG. Residue 136–137 participates in spermidine binding; it reads EE. Spermidine is bound at residue D243. An NAD(+)-binding site is contributed by G283. H288 contributes to the spermidine binding site. Position 308–309 (308–309) interacts with NAD(+); that stretch reads TA. Residues 314–316 and 323–329 each bind spermidine; these read GSD and EAVSWGK. K329 acts as the Nucleophile in catalysis. 342 to 343 is a binding site for NAD(+); that stretch reads DA.

Belongs to the deoxyhypusine synthase family. NAD(+) serves as cofactor.

The catalysed reaction is [eIF5A protein]-L-lysine + spermidine = [eIF5A protein]-deoxyhypusine + propane-1,3-diamine. It functions in the pathway protein modification; eIF5A hypusination. Functionally, catalyzes the NAD-dependent oxidative cleavage of spermidine and the subsequent transfer of the butylamine moiety of spermidine to the epsilon-amino group of a critical lysine residue of the eIF-5A precursor protein to form the intermediate deoxyhypusine residue. This is the first step of the post-translational modification of that lysine into an unusual amino acid residue named hypusine. Hypusination is unique to mature eIF-5A factor and is essential for its function. In Rattus norvegicus (Rat), this protein is Deoxyhypusine synthase (Dhps).